A 177-amino-acid chain; its full sequence is Large ribosomal subunit protein uL6 (177 aa).

The segment at 154–177 is disordered; that stretch reads PEPYKGKGVRYADEQVRRKEAKKK. The segment covering 155–171 has biased composition (basic and acidic residues); sequence EPYKGKGVRYADEQVRR.

It belongs to the universal ribosomal protein uL6 family. As to quaternary structure, part of the 50S ribosomal subunit.

Functionally, this protein binds to the 23S rRNA, and is important in its secondary structure. It is located near the subunit interface in the base of the L7/L12 stalk, and near the tRNA binding site of the peptidyltransferase center. In Alcanivorax borkumensis (strain ATCC 700651 / DSM 11573 / NCIMB 13689 / SK2), this protein is Large ribosomal subunit protein uL6.